The primary structure comprises 800 residues: Phenylalanine--tRNA ligase beta subunit (800 aa).

A tRNA-binding domain is found at Ala39 to Phe152. The region spanning Thr405–Thr480 is the B5 domain. Mg(2+)-binding residues include Asp458, Asp464, Glu467, and Glu468. Residues Thr707–Arg800 enclose the FDX-ACB domain.

The protein belongs to the phenylalanyl-tRNA synthetase beta subunit family. Type 1 subfamily. As to quaternary structure, tetramer of two alpha and two beta subunits. It depends on Mg(2+) as a cofactor.

The protein localises to the cytoplasm. The catalysed reaction is tRNA(Phe) + L-phenylalanine + ATP = L-phenylalanyl-tRNA(Phe) + AMP + diphosphate + H(+). This Streptococcus pneumoniae (strain ATCC BAA-255 / R6) protein is Phenylalanine--tRNA ligase beta subunit.